Reading from the N-terminus, the 219-residue chain is Ras-related protein Rab-3 (219 aa).

GTP-binding positions include 29–37, 48–54, 77–81, 135–138, and 165–167; these read GNSSVGKTS, TSAFVST, DTAGQ, NKCD, and SAK. The short motif at 51 to 59 is the Effector region element; it reads FVSTVGIDF. A disordered region spans residues 191 to 219; it reads LDKDPQQQPKGQKLEANPTQKPAQQQCNC. Residues 207–219 show a composition bias toward polar residues; that stretch reads NPTQKPAQQQCNC. 2 S-geranylgeranyl cysteine lipidation sites follow: Cys217 and Cys219. At Cys219 the chain carries Cysteine methyl ester.

The protein belongs to the small GTPase superfamily. Rab family.

The protein localises to the cell membrane. Involved in exocytosis by regulating a late step in synaptic vesicle fusion. Could play a role in neurotransmitter release by regulating membrane flow in the nerve terminal. Plays a role in the recruitment of endophilin unc-57 to synaptic vesicles. Probably by controlling dense-core vesicle trafficking, plays a role in the AVG neuron-mediated formation of the right axon tract of the ventral nerve cord. This is Ras-related protein Rab-3 (rab-3) from Caenorhabditis elegans.